The sequence spans 377 residues: Chaperone protein DnaJ (377 aa).

The J domain occupies 5-70 (DYYEVLGVGR…NKKAAYDQFG (66 aa)). The segment at 133–211 (GLTKELRIPT…CHGDGRVEKT (79 aa)) adopts a CR-type zinc-finger fold. Positions 146, 149, 163, 166, 185, 188, 199, and 202 each coordinate Zn(2+). 4 CXXCXGXG motif repeats span residues 146–153 (CDVCDGSG), 163–170 (CGTCHGQG), 185–192 (CPTCHGRG), and 199–206 (CSKCHGDG).

This sequence belongs to the DnaJ family. In terms of assembly, homodimer. It depends on Zn(2+) as a cofactor.

The protein resides in the cytoplasm. Its function is as follows. Participates actively in the response to hyperosmotic and heat shock by preventing the aggregation of stress-denatured proteins and by disaggregating proteins, also in an autonomous, DnaK-independent fashion. Unfolded proteins bind initially to DnaJ; upon interaction with the DnaJ-bound protein, DnaK hydrolyzes its bound ATP, resulting in the formation of a stable complex. GrpE releases ADP from DnaK; ATP binding to DnaK triggers the release of the substrate protein, thus completing the reaction cycle. Several rounds of ATP-dependent interactions between DnaJ, DnaK and GrpE are required for fully efficient folding. Also involved, together with DnaK and GrpE, in the DNA replication of plasmids through activation of initiation proteins. This chain is Chaperone protein DnaJ, found in Shewanella sp. (strain ANA-3).